We begin with the raw amino-acid sequence, 492 residues long: Prostaglandin E2 receptor EP4 subtype (492 aa).

At 1 to 19 (MSIPGTNASSSQASNPLNS) the chain is on the extracellular side. A glycan (N-linked (GlcNAc...) asparagine) is linked at Asn7. Residues 20–43 (PVTIPAVMFIFGVVGNLVAIVVLC) traverse the membrane as a helical segment. The Cytoplasmic portion of the chain corresponds to 44-55 (KSRKEQKETTFY). Residues 56–79 (TLVCGLAVTDLLGTLLVSPVTIAT) form a helical membrane-spanning segment. The Extracellular segment spans residues 80–96 (YLKGQWPGGHALCEYST). Cysteines 92 and 170 form a disulfide. Residues 97–115 (FILLFFGLSGLSIICAMSI) form a helical membrane-spanning segment. Topologically, residues 116-135 (ERYLAINHAYFYSHYVDKRL) are cytoplasmic. The chain crosses the membrane as a helical span at residues 136–160 (AGLTLFAVYASNVLFCALPSMGLGS). The Extracellular portion of the chain corresponds to 161–184 (SRLQYPATWCFIDWTTNVTAHAAF). The helical transmembrane segment at 185–211 (SYMYAGFSSFLILATVLCNVLVCGALL) threads the bilayer. The Cytoplasmic segment spans residues 212–273 (RMHRQFMRRT…RSFRRIAGAE (62 aa)). Residues 274–301 (IQMVILLIATSLVVLICSIPLVVRVFVN) form a helical membrane-spanning segment. The Extracellular portion of the chain corresponds to 302–318 (QLYRPQLEPVIGKNPDL). Residues 319-338 (QAIRIASVSPILDPWIYILL) traverse the membrane as a helical segment. Residues 339–492 (RKTVLSKAIE…ETLNLSEKCI (154 aa)) lie on the Cytoplasmic side of the membrane. A compositionally biased stretch (basic and acidic residues) spans 361 to 374 (RRERSGPHCSDSRR). The interval 361-383 (RRERSGPHCSDSRRTSSAVSGHS) is disordered. A phosphoserine mark is found at Ser380, Ser383, Ser385, and Ser388.

Belongs to the G-protein coupled receptor 1 family. Interacts with FEM1A. In terms of processing, phosphorylation mediates agonist-mediated desensitization by promoting cytoplasmic retention.

It is found in the cell membrane. In terms of biological role, receptor for prostaglandin E2 (PGE2). The activity of this receptor is mediated by G(s) proteins that stimulate adenylate cyclase. Has a relaxing effect on smooth muscle. May play an important role in regulating renal hemodynamics, intestinal epithelial transport, adrenal aldosterone secretion, and uterine function. The chain is Prostaglandin E2 receptor EP4 subtype (PTGER4) from Bos taurus (Bovine).